The primary structure comprises 498 residues: MFSLQEICRKNIYFLPDWLSEHVIQRLGLYWEKHGSLQRIGDDYVLIQQDLIIPINEALRMAGEEGNDEVVQLLLLWEGNIHYAIIGALEGDHYSLIRKLYDQIKDCHNILPLIQDPKTFEKCHELDESCNISCLVLHAVKNDMLCILQEYKMRLSGGDIQEVFETACRSQKYDIVTWMGENIAIYNPGVVFDIAFDLMNVSLLSIGYTLLFNHHINNMNENIDSLLAQHLEWAAGMGLLHFMLETLKYGGDVTITVLSEAVKYDHRKVLDYFLRRKNLYQEDLEELLLLAIRADCSKKTLNLLLSYLNYSINNIRKKILQCVKEYETTIIIKILWKRKINLIGPILADFIGYHSYTYMVDFMREFSIHPEKMIKMAARESREDLIIKFSKNVYKEPKDRLHYLKSLVYTMRHKEGKQLLIYTIHNLYKACHLESKEMFNLARFYARHNAVIQFKSICHDLSKLNINIKNLLLECLRIAIKKNYPQLIRTIKTDMSYE.

This sequence belongs to the asfivirus MGF 505 family.

Functionally, plays a role in virus cell tropism, and may be required for efficient virus replication in macrophages. In Ornithodoros (relapsing fever ticks), this protein is Protein MGF 505-5R.